Here is a 515-residue protein sequence, read N- to C-terminus: 2,3-bisphosphoglycerate-independent phosphoglycerate mutase 1 (515 aa).

Residues Asp-14 and Ser-64 each coordinate Mn(2+). Residue Ser-64 is the Phosphoserine intermediate of the active site. Substrate-binding positions include His-125, 155–156 (RD), Arg-187, Arg-193, 264–267 (RADR), and Lys-337. Residues Asp-404, His-408, Asp-445, His-446, and His-464 each coordinate Mn(2+).

The protein belongs to the BPG-independent phosphoglycerate mutase family. Mn(2+) is required as a cofactor.

It catalyses the reaction (2R)-2-phosphoglycerate = (2R)-3-phosphoglycerate. The protein operates within carbohydrate degradation; glycolysis; pyruvate from D-glyceraldehyde 3-phosphate: step 3/5. Its function is as follows. Catalyzes the interconversion of 2-phosphoglycerate and 3-phosphoglycerate. This is 2,3-bisphosphoglycerate-independent phosphoglycerate mutase 1 from Methanosarcina acetivorans (strain ATCC 35395 / DSM 2834 / JCM 12185 / C2A).